The chain runs to 301 residues: Large ribosomal subunit protein uL18 (301 aa).

A compositionally biased stretch (basic and acidic residues) spans N257–K271. Positions N257–T283 are disordered.

Belongs to the universal ribosomal protein uL18 family. Component of the large ribosomal subunit (LSU).

Its subcellular location is the cytoplasm. It is found in the nucleus. Component of the ribosome, a large ribonucleoprotein complex responsible for the synthesis of proteins in the cell. The small ribosomal subunit (SSU) binds messenger RNAs (mRNAs) and translates the encoded message by selecting cognate aminoacyl-transfer RNA (tRNA) molecules. The large subunit (LSU) contains the ribosomal catalytic site termed the peptidyl transferase center (PTC), which catalyzes the formation of peptide bonds, thereby polymerizing the amino acids delivered by tRNAs into a polypeptide chain. The nascent polypeptides leave the ribosome through a tunnel in the LSU and interact with protein factors that function in enzymatic processing, targeting, and the membrane insertion of nascent chains at the exit of the ribosomal tunnel. The protein is Large ribosomal subunit protein uL18 (RPL5) of Tetrahymena thermophila (strain SB210).